Consider the following 145-residue polypeptide: Large ribosomal subunit protein uL11 (145 aa).

It belongs to the universal ribosomal protein uL11 family. In terms of assembly, part of the ribosomal stalk of the 50S ribosomal subunit. Interacts with L10 and the large rRNA to form the base of the stalk. L10 forms an elongated spine to which L12 dimers bind in a sequential fashion forming a multimeric L10(L12)X complex. One or more lysine residues are methylated.

In terms of biological role, forms part of the ribosomal stalk which helps the ribosome interact with GTP-bound translation factors. The protein is Large ribosomal subunit protein uL11 of Rickettsia felis (strain ATCC VR-1525 / URRWXCal2) (Rickettsia azadi).